We begin with the raw amino-acid sequence, 336 residues long: ATP-dependent 6-phosphofructokinase (336 aa).

Position 11 (Gly11) interacts with ATP. 21–25 (RAVVR) contributes to the ADP binding site. ATP is bound by residues 72-73 (RY) and 102-105 (GDGS). Asp103 contacts Mg(2+). A substrate-binding site is contributed by 125–127 (TID). The active-site Proton acceptor is Asp127. Arg154 is an ADP binding site. Residues Arg162 and 169 to 171 (MGR) contribute to the substrate site. ADP contacts are provided by residues 185–187 (GAD), Lys211, and 213–215 (KKH). Residues Glu222, Arg244, and 250–253 (HIQR) contribute to the substrate site.

This sequence belongs to the phosphofructokinase type A (PFKA) family. ATP-dependent PFK group I subfamily. Prokaryotic clade 'B1' sub-subfamily. As to quaternary structure, homotetramer. Requires Mg(2+) as cofactor.

It localises to the cytoplasm. The enzyme catalyses beta-D-fructose 6-phosphate + ATP = beta-D-fructose 1,6-bisphosphate + ADP + H(+). Its pathway is carbohydrate degradation; glycolysis; D-glyceraldehyde 3-phosphate and glycerone phosphate from D-glucose: step 3/4. Allosterically activated by ADP and other diphosphonucleosides, and allosterically inhibited by phosphoenolpyruvate. Its function is as follows. Catalyzes the phosphorylation of D-fructose 6-phosphate to fructose 1,6-bisphosphate by ATP, the first committing step of glycolysis. The protein is ATP-dependent 6-phosphofructokinase of Streptococcus sanguinis (strain SK36).